A 289-amino-acid chain; its full sequence is 4-diphosphocytidyl-2-C-methyl-D-erythritol kinase (289 aa).

The active site involves Lys10. Position 99–109 (99–109 (PMGGGLGGGSS)) interacts with ATP. Asp141 is an active-site residue.

The protein belongs to the GHMP kinase family. IspE subfamily. In terms of assembly, homodimer.

It catalyses the reaction 4-CDP-2-C-methyl-D-erythritol + ATP = 4-CDP-2-C-methyl-D-erythritol 2-phosphate + ADP + H(+). The protein operates within isoprenoid biosynthesis; isopentenyl diphosphate biosynthesis via DXP pathway; isopentenyl diphosphate from 1-deoxy-D-xylulose 5-phosphate: step 3/6. Its function is as follows. Catalyzes the phosphorylation of the position 2 hydroxy group of 4-diphosphocytidyl-2C-methyl-D-erythritol. This Enterobacter sp. (strain 638) protein is 4-diphosphocytidyl-2-C-methyl-D-erythritol kinase.